Here is a 66-residue protein sequence, read N- to C-terminus: MPKMKTHRGSAKRFKRTGSGKLKRRHGFTSHMFANKSQKQKRKLRKSAMVSAGDFKRIRQMVAKMK.

Residues 1-28 are compositionally biased toward basic residues; the sequence is MPKMKTHRGSAKRFKRTGSGKLKRRHGF. The interval 1-50 is disordered; sequence MPKMKTHRGSAKRFKRTGSGKLKRRHGFTSHMFANKSQKQKRKLRKSAMV.

Belongs to the bacterial ribosomal protein bL35 family.

The polypeptide is Large ribosomal subunit protein bL35 (Listeria monocytogenes serotype 4a (strain HCC23)).